A 346-amino-acid polypeptide reads, in one-letter code: 3 beta-hydroxysteroid dehydrogenase/Delta 5--&gt;4-isomerase (346 aa).

The Proton acceptor role is filled by tyrosine 147. Residue lysine 151 coordinates NAD(+).

It belongs to the 3-beta-HSD family.

The catalysed reaction is a 3beta-hydroxy-Delta(5)-steroid + NAD(+) = a 3-oxo-Delta(5)-steroid + NADH + H(+). The enzyme catalyses a 3-oxo-Delta(5)-steroid = a 3-oxo-Delta(4)-steroid. It functions in the pathway lipid metabolism; steroid biosynthesis. In terms of biological role, catalyzes the oxidative conversion of Delta(5)-ene-3-beta-hydroxy steroid, and the oxidative conversion of ketosteroids. The 3-beta-HSD enzymatic system plays a crucial role in the biosynthesis of all classes of hormonal steroids. During viral infection, steroid production contributes to virulence by inhibiting the host inflammatory response. The polypeptide is 3 beta-hydroxysteroid dehydrogenase/Delta 5--&gt;4-isomerase (OPG174) (Vaccinia virus (strain Western Reserve) (VACV)).